Here is a 100-residue protein sequence, read N- to C-terminus: Acylphosphatase (100 aa).

The 87-residue stretch at 14 to 100 (RLSAWVHGHV…RGDLTGFEER (87 aa)) folds into the Acylphosphatase-like domain. Active-site residues include Arg29 and Asn47.

This sequence belongs to the acylphosphatase family.

The enzyme catalyses an acyl phosphate + H2O = a carboxylate + phosphate + H(+). The sequence is that of Acylphosphatase (acyP) from Nocardia farcinica (strain IFM 10152).